A 507-amino-acid polypeptide reads, in one-letter code: 3-octaprenyl-4-hydroxybenzoate carboxy-lyase (507 aa).

Asn177 lines the Mn(2+) pocket. Prenylated FMN is bound by residues 180 to 182, 194 to 196, and 199 to 200; these read IYR, RWL, and RG. Residue Glu243 participates in Mn(2+) binding. Asp302 functions as the Proton donor in the catalytic mechanism.

The protein belongs to the UbiD family. As to quaternary structure, homohexamer. Requires prenylated FMN as cofactor. The cofactor is Mn(2+).

Its subcellular location is the cell membrane. It catalyses the reaction a 4-hydroxy-3-(all-trans-polyprenyl)benzoate + H(+) = a 2-(all-trans-polyprenyl)phenol + CO2. It participates in cofactor biosynthesis; ubiquinone biosynthesis. Catalyzes the decarboxylation of 3-octaprenyl-4-hydroxy benzoate to 2-octaprenylphenol, an intermediate step in ubiquinone biosynthesis. This Cupriavidus metallidurans (strain ATCC 43123 / DSM 2839 / NBRC 102507 / CH34) (Ralstonia metallidurans) protein is 3-octaprenyl-4-hydroxybenzoate carboxy-lyase.